Consider the following 129-residue polypeptide: Small ribosomal subunit protein uS11 (129 aa).

Belongs to the universal ribosomal protein uS11 family. In terms of assembly, part of the 30S ribosomal subunit. Interacts with proteins S7 and S18. Binds to IF-3.

Located on the platform of the 30S subunit, it bridges several disparate RNA helices of the 16S rRNA. Forms part of the Shine-Dalgarno cleft in the 70S ribosome. In Marinobacter nauticus (strain ATCC 700491 / DSM 11845 / VT8) (Marinobacter aquaeolei), this protein is Small ribosomal subunit protein uS11.